A 181-amino-acid chain; its full sequence is Caltractin ICL1d (181 aa).

The interval 1–29 is disordered; it reads MARRGQQPPPQQAPPAQKNQTGKFNPAEF. 4 EF-hand domains span residues 37 to 72, 73 to 108, 110 to 145, and 146 to 181; these read EEVL…LGFE, AKNQ…RISE, DSKA…LGET, and MDDS…KTFA. Ca(2+)-binding residues include D50, D52, T54, S56, E61, D86, D88, S90, Q92, and E97.

It belongs to the centrin family. In terms of assembly, monomer.

It localises to the cytoplasm. Its subcellular location is the cytoskeleton. Functionally, plays a fundamental role in microtubule organizing center structure and function. Component of the infraciliary lattice (ICL) and the ciliary basal bodies. The chain is Caltractin ICL1d (Icl1d) from Paramecium tetraurelia.